The chain runs to 772 residues: Serine/threonine-protein kinase tousled-like 2 (772 aa).

The disordered stretch occupies residues 24–126 (GVSKGPLNSE…SNPLPRRVEQ (103 aa)). Polar residues predominate over residues 29–44 (PLNSESSNQSLCSVGS). Residues 46–61 (SDKEVETPEKKQNDQR) show a composition bias toward basic and acidic residues. Phosphoserine occurs at positions 73, 94, 99, 115, 117, and 134. The disordered stretch occupies residues 180 to 208 (QNSPSSTGSGNTEHSCSSQKQISIQHRQT). Residues 225-276 (NSDLEKKEGRIDDLLRANCDLRRQIDEQQKMLEKYKERLNRCVTMSKKLLIE) form a required for interaction with TLK1 and DYNLL1/LC8 region. Coiled coils occupy residues 225 to 276 (NSDL…LLIE) and 317 to 347 (AFQNLIKQQERINSQREEIERQRKMLAKRKP). The interval 342–385 (LAKRKPPAMGQAPPATNEQKQRKSKTNGAENETPSSGNTELKDT) is disordered. The span at 367–380 (TNGAENETPSSGNT) shows a compositional bias: polar residues. Residues 403–451 (HEQEEIFKLRLGHLKKEEAEIQAELERLERVRNLHIRELKRIHNEDNSQ) adopt a coiled-coil conformation. Residues 462–741 (YLLLHLLGRG…VQQLACDPYL (280 aa)) enclose the Protein kinase domain. ATP contacts are provided by residues 468–476 (LGRGGFSEV) and lysine 491. Aspartate 592 serves as the catalytic Proton acceptor. At serine 750 the chain carries Phosphoserine; by CHEK1.

This sequence belongs to the protein kinase superfamily. Ser/Thr protein kinase family. As to quaternary structure, monomer. May form homodimers; homodimerization may enhance autophosphoylation and enzymatic activity. Heterodimer with TLK1. Interacts with YWHAZ; association with 14-3-3 proteins such as YWHAZ regulates subcellular location. May also interact with FEZ1/LZTS1 and FEZ2. Interacts with CHD7 and CHD8. Interacts with DYNLL1/LC8. The cofactor is Mg(2+). Post-translationally, phosphorylated at Ser-750, probably by CHEK1. In terms of processing, autophosphorylated; phosphorylation promotes the assembly of higher order oligomers and enzymatic activity. In terms of tissue distribution, detected in placenta, fetal liver, kidney, pancreas, heart and skeletal muscle. Highly expressed in testis. Detected in spleen, thymus, colon, ovary, small intestine, prostate and peripheral blood leukocytes. Almost undetectable in liver and lung.

The protein resides in the nucleus. Its subcellular location is the nucleoplasm. It is found in the cytoplasm. The protein localises to the perinuclear region. It localises to the cytoskeleton. It catalyses the reaction L-seryl-[protein] + ATP = O-phospho-L-seryl-[protein] + ADP + H(+). The enzyme catalyses L-threonyl-[protein] + ATP = O-phospho-L-threonyl-[protein] + ADP + H(+). With respect to regulation, cell cycle-regulated, with maximal activity in the S-phase. Rapidly and transiently inhibited by phosphorylation following the generation of DNA double-stranded breaks during S-phase, probably by CHEK1, possibly at Ser-750. This inhibition is cell cycle checkpoint- and ATM-dependent. Its function is as follows. Serine/threonine-protein kinase involved in the process of chromatin assembly and probably also DNA replication, transcription, repair, and chromosome segregation. Phosphorylates the chromatin assembly factors ASF1A and ASF1B. Phosphorylation of ASF1A prevents its proteasome-mediated degradation, thereby enhancing chromatin assembly. Negative regulator of amino acid starvation-induced autophagy. The protein is Serine/threonine-protein kinase tousled-like 2 of Homo sapiens (Human).